A 78-amino-acid chain; its full sequence is Large ribosomal subunit protein bL28 (78 aa).

This sequence belongs to the bacterial ribosomal protein bL28 family.

The protein is Large ribosomal subunit protein bL28 of Ruthia magnifica subsp. Calyptogena magnifica.